Consider the following 311-residue polypeptide: MTESVTVAELVKANRLDVYTGKDNLDRKITTSDISRPGLELTGYFNYYPAKRVQLLGITETSFAKGMSHKELLNVMRKMCQPETPAFVISTQLDPPEELTQSAEEAGIPILGTKLTTSRVLSNMTNFLEGKLAERQSVHGVLVDIYGVGVMITGDSGVGKSETALELVKRGHRLIADDRVEVYQQDEQTLVGAAPAILSHLLEIRGIGIIDVMNLFGAGAVRSETDIDLIVHLELWQDDNHFDRLGNNSETQRFFDVVVPKISIPVKTGRNLAIIIEAAAMNFRARSMGYDATKVFDDNLKRLIKQNANKS.

Active-site residues include H139 and K160. 154 to 161 (GDSGVGKS) is an ATP binding site. S161 contacts Mg(2+). Catalysis depends on D178, which acts as the Proton acceptor; for phosphorylation activity. Proton donor; for dephosphorylation activity. Residues 202–211 (LEIRGIGIID) are important for the catalytic mechanism of both phosphorylation and dephosphorylation. Residue E203 participates in Mg(2+) binding. R244 is an active-site residue. The important for the catalytic mechanism of dephosphorylation stretch occupies residues 265-270 (PVKTGR).

Belongs to the HPrK/P family. In terms of assembly, homohexamer. Mg(2+) is required as a cofactor.

The catalysed reaction is [HPr protein]-L-serine + ATP = [HPr protein]-O-phospho-L-serine + ADP + H(+). The enzyme catalyses [HPr protein]-O-phospho-L-serine + phosphate + H(+) = [HPr protein]-L-serine + diphosphate. Functionally, catalyzes the ATP- as well as the pyrophosphate-dependent phosphorylation of a specific serine residue in HPr, a phosphocarrier protein of the phosphoenolpyruvate-dependent sugar phosphotransferase system (PTS). HprK/P also catalyzes the pyrophosphate-producing, inorganic phosphate-dependent dephosphorylation (phosphorolysis) of seryl-phosphorylated HPr (P-Ser-HPr). The two antagonistic activities of HprK/P are regulated by several intracellular metabolites, which change their concentration in response to the absence or presence of rapidly metabolisable carbon sources (glucose, fructose, etc.) in the growth medium. Therefore, by controlling the phosphorylation state of HPr, HPrK/P is a sensor enzyme that plays a major role in the regulation of carbon metabolism and sugar transport: it mediates carbon catabolite repression (CCR), and regulates PTS-catalyzed carbohydrate uptake and inducer exclusion. The chain is HPr kinase/phosphorylase from Levilactobacillus brevis (strain ATCC 367 / BCRC 12310 / CIP 105137 / JCM 1170 / LMG 11437 / NCIMB 947 / NCTC 947) (Lactobacillus brevis).